Consider the following 296-residue polypeptide: Protoheme IX farnesyltransferase (296 aa).

Topologically, residues Met1–Val9 are cytoplasmic. Residues Thr10–Leu28 form a helical membrane-spanning segment. Residues Ala29–Pro37 are Periplasmic-facing. A helical transmembrane segment spans residues Leu38–Phe56. At Asn57–Lys78 the chain is on the cytoplasmic side. A helical membrane pass occupies residues Gly79 to Gly97. At Phe98–Pro107 the chain is on the periplasmic side. A helical transmembrane segment spans residues Leu108–Leu126. Residues Tyr127–Pro197 lie on the Cytoplasmic side of the membrane. The chain crosses the membrane as a helical span at residues Val198–Phe216. Residues Ala217–Tyr228 lie on the Periplasmic side of the membrane. The chain crosses the membrane as a helical span at residues Ala229 to Met247. Over Ala248–Ser268 the chain is Cytoplasmic. The helical transmembrane segment at Ile269–Asn287 threads the bilayer. Over Ser288–Trp296 the chain is Periplasmic.

This sequence belongs to the UbiA prenyltransferase family. Protoheme IX farnesyltransferase subfamily.

The protein resides in the cell inner membrane. It catalyses the reaction heme b + (2E,6E)-farnesyl diphosphate + H2O = Fe(II)-heme o + diphosphate. Its pathway is porphyrin-containing compound metabolism; heme O biosynthesis; heme O from protoheme: step 1/1. Its function is as follows. Converts heme B (protoheme IX) to heme O by substitution of the vinyl group on carbon 2 of heme B porphyrin ring with a hydroxyethyl farnesyl side group. The sequence is that of Protoheme IX farnesyltransferase from Salmonella typhimurium (strain LT2 / SGSC1412 / ATCC 700720).